The sequence spans 266 residues: Probable phosphoadenosine phosphosulfate reductase (266 aa).

The tract at residues 219–246 is disordered; it reads TQPVREGEDERAGRWRGREKTECGLHSH. Basic and acidic residues predominate over residues 223 to 243; that stretch reads REGEDERAGRWRGREKTECGL.

This sequence belongs to the PAPS reductase family. CysH subfamily.

It localises to the cytoplasm. It is found in the nucleus. The enzyme catalyses [thioredoxin]-disulfide + sulfite + adenosine 3',5'-bisphosphate + 2 H(+) = [thioredoxin]-dithiol + 3'-phosphoadenylyl sulfate. It functions in the pathway sulfur metabolism; hydrogen sulfide biosynthesis; sulfite from sulfate: step 3/3. Its function is as follows. The NADP dependent reduction of PAPS into sulfite involves thioredoxin which probably plays the role of a thiol carrier. Required for methionine synthesis. The polypeptide is Probable phosphoadenosine phosphosulfate reductase (met16) (Schizosaccharomyces pombe (strain 972 / ATCC 24843) (Fission yeast)).